A 101-amino-acid polypeptide reads, in one-letter code: MANVTVTFTITEFCLHTGISEEELNEIVGLGVVEPREIQETTWVFDDHAAIVVQRAVRLRHELALDWPGIAVALTLMDDIAHLKQENRLLRQRLSRFVAHP.

This sequence belongs to the CbpM family.

Functionally, interacts with CbpA and inhibits both the DnaJ-like co-chaperone activity and the DNA binding activity of CbpA. Together with CbpA, modulates the activity of the DnaK chaperone system. Does not inhibit the co-chaperone activity of DnaJ. The chain is Chaperone modulatory protein CbpM from Escherichia coli (strain K12 / MC4100 / BW2952).